The primary structure comprises 527 residues: Peptide chain release factor 3 (527 aa).

A tr-type G domain is found at 9–277 (AKRRTFAIIS…AVVNWAPMPL (269 aa)). Residues 18–25 (SHPDAGKT), 86–90 (DTPGH), and 140–143 (NKLD) contribute to the GTP site.

Belongs to the TRAFAC class translation factor GTPase superfamily. Classic translation factor GTPase family. PrfC subfamily.

Its subcellular location is the cytoplasm. Increases the formation of ribosomal termination complexes and stimulates activities of RF-1 and RF-2. It binds guanine nucleotides and has strong preference for UGA stop codons. It may interact directly with the ribosome. The stimulation of RF-1 and RF-2 is significantly reduced by GTP and GDP, but not by GMP. The chain is Peptide chain release factor 3 from Pseudomonas syringae pv. tomato (strain ATCC BAA-871 / DC3000).